Reading from the N-terminus, the 114-residue chain is Fluoride-specific ion channel FluC 1 (114 aa).

A run of 4 helical transmembrane segments spans residues 3–23 (IDIK…GALF), 30–50 (IFIV…LNIL), 55–75 (LTLC…MSHL), and 87–107 (FLLN…LGHI). Residues Gly-63 and Thr-66 each contribute to the Na(+) site.

Belongs to the fluoride channel Fluc/FEX (TC 1.A.43) family.

The protein resides in the cell inner membrane. The enzyme catalyses fluoride(in) = fluoride(out). Its activity is regulated as follows. Na(+) is not transported, but it plays an essential structural role and its presence is essential for fluoride channel function. Functionally, fluoride-specific ion channel. Important for reducing fluoride concentration in the cell, thus reducing its toxicity. The protein is Fluoride-specific ion channel FluC 1 of Prochlorococcus marinus (strain NATL2A).